A 1364-amino-acid polypeptide reads, in one-letter code: MNISSMLSNDSNTASQDVGGNFDDSQRNNDKGGSQDANSKKMGTGEAEDHANGNASVEGNGIANHGSATNGNTKGTDDSSNVNIVESIIPKPIRPTRSSIESDEEDVGKNYNSIISNDSEHISQRYLENFEDKVNAINKIDQVLIKGNNMRVLNQEEENLNILIRNSGEIAENYIDRVVTEDISSKANILNGKDSVGKEFKWGSTRDMKKRELELEVDNASKADTAAKKGGNKSKQGATKSTPAKKAKAKPKRKPSATDDTSEESQLGKKRKTRAGSVSGASQNDEKSANGKVKLKLTLKDQAEEDSASADAASKVTTKEQKIITKQYDNTFVSIWKDLSRKDGPKVSRLMQQSTQAKMINLKKTSILAAREAKRWQLKNNRNQKDLTTKARRAMREMFNFWKRNERIERELRKKHEKEILDKAKKEEEERESKRQSRKLNFLITQTELYSHFIGKKIKTDEFEGTDSDPNANFKSANHHYDKYSNIDGEGKDFNSIDFDNEDEESLNKAAAVNAQIALEAAKTKAQAFDNDPLKNPDTNGEEMNFQNPTLLGDINISQPDLLKCTLKEYQVKGLNWLANLYEQGINGILADEMGLGKTVQSISVLAYLAETHNIWGPFLVVTPASTLHNWQQEISRFVPEFKVIPYWGNAKDRKVLRKFWDRKNFRYGKDAPFHVLVTSYQLVVADAAYFQKMKWQYMILDEAQAIKSSQSSRWKSLLSFSCRNRLLLTGTPIQNSMQELWALLHFIMPSLFDSHDEFSDWFSKDIESHAQSNTELNEQQLRRLHVILKPFMLRRIKKNVQSELGDKLEIDVFCDLTHRQKKYYQMLTSQISIMDLLDSANNSSDDSAQSLMNLVMQFRKVCNHPDLFERADVKSSFAFGRFAETSSFLRETNELEMSYSTENLIKYNMPRIVYEEILQPTFDNDVGSRKKINNMFNIYHPSNIANDELENFSWLRFVDQSPQEMNNLSKQNIIERAINNREYSDINYERINRLKYTYDEDNESFLPNSKLLLINELQNNHALISNSTYLKELYSIKKKVYEDMVINNMKPAAEPLVKAPPVAVVCDNISFVHDLQDSLFDPKIRSSLMPLPFNRELELLKSSIPITEYPKSNMLPNAINKFIDYSNIRMPSMNRFITESGKLSKLDELLVDLRQNDHRVLIYFQMTKMMDLMEEYLTYRQHKYIRLDGSSKLDDRRDLVHDWQTKPEIFVFLLSTRAGGLGINLTAADTVIFYDSDWNPTIDSQAMDRAHRLGQTRQVTVYRLLTRGTIEERMRDRAKQKEQVQQVVMEGKSAIANKEESGNKKKDVAFLLLGNDDSSAAALNDDSEEKQNLQDSKKSQAKNLEDMYHEGEGEFSGNVTPSL.

Polar residues-rich tracts occupy residues 1–18 (MNIS…SQDV) and 66–84 (GSAT…NVNI). Disordered regions lie at residues 1–84 (MNIS…NVNI) and 213–293 (LELE…NGKV). Positions 213 to 227 (LELEVDNASKADTAA) are enriched in basic and acidic residues. Positions 243 to 255 (PAKKAKAKPKRKP) are enriched in basic residues. Residues 335–460 (IWKDLSRKDG…SHFIGKKIKT (126 aa)) enclose the DBINO domain. Residues 579–751 (ANLYEQGING…WALLHFIMPS (173 aa)) enclose the Helicase ATP-binding domain. 592–599 (DEMGLGKT) is a binding site for ATP. A DEAQ box motif is present at residues 702–705 (DEAQ). A Helicase C-terminal domain is found at 1146 to 1302 (KLDELLVDLR…KSAIANKEES (157 aa)). Residues 1321–1364 (AAALNDDSEEKQNLQDSKKSQAKNLEDMYHEGEGEFSGNVTPSL) form a disordered region. Basic and acidic residues predominate over residues 1330-1353 (EKQNLQDSKKSQAKNLEDMYHEGE).

It belongs to the SNF2/RAD54 helicase family. As to quaternary structure, component of the INO80 chromatin-remodeling complex.

Its subcellular location is the nucleus. It carries out the reaction ATP + H2O = ADP + phosphate + H(+). Functionally, ATPase component of the INO80 complex which remodels chromatin by shifting nucleosomes and is involved in DNA repair. This is Chromatin-remodeling ATPase INO80 (INO80) from Debaryomyces hansenii (strain ATCC 36239 / CBS 767 / BCRC 21394 / JCM 1990 / NBRC 0083 / IGC 2968) (Yeast).